The chain runs to 65 residues: Large ribosomal subunit protein bL32 (65 aa).

The span at 1 to 19 (MAIVPKRKTSKQRKHKRQS) shows a compositional bias: basic residues. The tract at residues 1 to 21 (MAIVPKRKTSKQRKHKRQSHS) is disordered.

The protein belongs to the bacterial ribosomal protein bL32 family.

In Mesomycoplasma hyopneumoniae (strain 7448) (Mycoplasma hyopneumoniae), this protein is Large ribosomal subunit protein bL32.